The chain runs to 197 residues: Alkyl hydroperoxide reductase C (197 aa).

Positions 2–163 (VLVTQNAPNF…MIRMVDALDF (162 aa)) constitute a Thioredoxin domain. The active-site Cysteine sulfenic acid (-SOH) intermediate is C50.

This sequence belongs to the peroxiredoxin family. AhpC/Prx1 subfamily. In terms of assembly, homodimer; disulfide-linked, upon oxidation. 5 homodimers assemble to form a ring-like decamer.

It localises to the cytoplasm. The catalysed reaction is a hydroperoxide + NADH + H(+) = an alcohol + NAD(+) + H2O. Functionally, thiol-specific peroxidase that catalyzes the reduction of hydrogen peroxide and organic hydroperoxides to water and alcohols, respectively. Plays a role in cell protection against oxidative stress by detoxifying peroxides. This chain is Alkyl hydroperoxide reductase C, found in Buchnera aphidicola subsp. Acyrthosiphon pisum (strain APS) (Acyrthosiphon pisum symbiotic bacterium).